The following is a 148-amino-acid chain: Large-conductance mechanosensitive channel (148 aa).

2 helical membrane-spanning segments follow: residues 14-34 and 85-105; these read VVDMAVGIIIGAAFTTIINTL and GIFVNACISFLIVTFVMFLSV.

This sequence belongs to the MscL family. In terms of assembly, homopentamer.

The protein resides in the cell inner membrane. In terms of biological role, channel that opens in response to stretch forces in the membrane lipid bilayer. May participate in the regulation of osmotic pressure changes within the cell. This Chlorobium phaeobacteroides (strain DSM 266 / SMG 266 / 2430) protein is Large-conductance mechanosensitive channel.